A 119-amino-acid chain; its full sequence is Large ribosomal subunit protein uL18 (119 aa).

This sequence belongs to the universal ribosomal protein uL18 family. Part of the 50S ribosomal subunit; part of the 5S rRNA/L5/L18/L25 subcomplex. Contacts the 5S and 23S rRNAs.

This is one of the proteins that bind and probably mediate the attachment of the 5S RNA into the large ribosomal subunit, where it forms part of the central protuberance. This Nitratidesulfovibrio vulgaris (strain DSM 19637 / Miyazaki F) (Desulfovibrio vulgaris) protein is Large ribosomal subunit protein uL18.